The primary structure comprises 41 residues: Alpha-conotoxin TxIB (41 aa).

The propeptide occupies Phe-1 to Val-20. Disulfide bonds link Cys-23–Cys-29 and Cys-24–Cys-37. The ser-Xaa-Pro motif, crucial for potent interaction with nAChR stretch occupies residues Ser-25–Pro-27. The residue at position 37 (Cys-37) is a Cysteine amide; in Alpha-conotoxin TxIB. Positions Gly-39–Arg-41 are excised as a propeptide.

It belongs to the conotoxin A superfamily. Expressed by the venom duct.

The protein resides in the secreted. Functionally, alpha-conotoxins act on postsynaptic membranes, they bind to the nicotinic acetylcholine receptors (nAChR) and thus inhibit them. This conotoxin is a subtype-specific blocker of alpha-6/alpha-3-beta-2-beta-3 (CHRNA6/CHRNA3-CHRNB2-CHRNB3) nAChRs nicotinic acetylcholine receptors (nAChRs) (IC(50)=28.4 nM). This Conus textile (Cloth-of-gold cone) protein is Alpha-conotoxin TxIB.